A 223-amino-acid chain; its full sequence is Small ribosomal subunit protein uS3 (223 aa).

The 79-residue stretch at 39–117 (IREHLRKKPS…RPELNAKLVA (79 aa)) folds into the KH type-2 domain.

It belongs to the universal ribosomal protein uS3 family. In terms of assembly, part of the 30S ribosomal subunit. Forms a tight complex with proteins S10 and S14.

Functionally, binds the lower part of the 30S subunit head. Binds mRNA in the 70S ribosome, positioning it for translation. The protein is Small ribosomal subunit protein uS3 of Chlamydia felis (strain Fe/C-56) (Chlamydophila felis).